The following is a 434-amino-acid chain: uncharacterized protein (434 aa).

K216 bears the N6-(pyridoxal phosphate)lysine mark.

This is an uncharacterized protein from Schizosaccharomyces pombe (strain 972 / ATCC 24843) (Fission yeast).